The chain runs to 345 residues: Methionine import ATP-binding protein MetN (345 aa).

An ABC transporter domain is found at 2 to 241 (IKLNNITKIF…PKTELAQEFI (240 aa)). 38 to 45 (GASGAGKS) contributes to the ATP binding site.

This sequence belongs to the ABC transporter superfamily. Methionine importer (TC 3.A.1.24) family. In terms of assembly, the complex is composed of two ATP-binding proteins (MetN), two transmembrane proteins (MetI) and a solute-binding protein (MetQ).

The protein resides in the cell inner membrane. It carries out the reaction L-methionine(out) + ATP + H2O = L-methionine(in) + ADP + phosphate + H(+). It catalyses the reaction D-methionine(out) + ATP + H2O = D-methionine(in) + ADP + phosphate + H(+). In terms of biological role, part of the ABC transporter complex MetNIQ involved in methionine import. Responsible for energy coupling to the transport system. This is Methionine import ATP-binding protein MetN from Haemophilus influenzae (strain 86-028NP).